Here is a 276-residue protein sequence, read N- to C-terminus: Large ribosomal subunit protein uL2 (276 aa).

Residues 222–276 (GVAMNPIDHPLGGGEGRSSGGRHPVSPWGMPTKGYKTRDRKKASSKLIIKRRGQK) are disordered. The span at 259–276 (RDRKKASSKLIIKRRGQK) shows a compositional bias: basic residues.

Belongs to the universal ribosomal protein uL2 family. In terms of assembly, part of the 50S ribosomal subunit. Forms a bridge to the 30S subunit in the 70S ribosome.

Its function is as follows. One of the primary rRNA binding proteins. Required for association of the 30S and 50S subunits to form the 70S ribosome, for tRNA binding and peptide bond formation. It has been suggested to have peptidyltransferase activity; this is somewhat controversial. Makes several contacts with the 16S rRNA in the 70S ribosome. This Nitratidesulfovibrio vulgaris (strain ATCC 29579 / DSM 644 / CCUG 34227 / NCIMB 8303 / VKM B-1760 / Hildenborough) (Desulfovibrio vulgaris) protein is Large ribosomal subunit protein uL2.